The following is an 800-amino-acid chain: Elongation factor G, mitochondrial (800 aa).

A mitochondrion-targeting transit peptide spans 1–59 (MRVIRAVATLHAGRAAAVRQGVRSVSLGACRAAVETPSLRSAGSQFESRRLFSRSSYLR). Residues 99–385 (ARVRNIGIAA…AVCDYLPNPN (287 aa)) enclose the tr-type G domain. Residues 108–115 (AHIDSGKT), 183–187 (DTPGH), and 237–240 (NKMD) contribute to the GTP site.

This sequence belongs to the TRAFAC class translation factor GTPase superfamily. Classic translation factor GTPase family. EF-G/EF-2 subfamily.

The protein resides in the mitochondrion. Its pathway is protein biosynthesis; polypeptide chain elongation. Its function is as follows. Mitochondrial GTPase that catalyzes the GTP-dependent ribosomal translocation step during translation elongation. During this step, the ribosome changes from the pre-translocational (PRE) to the post-translocational (POST) state as the newly formed A-site-bound peptidyl-tRNA and P-site-bound deacylated tRNA move to the P and E sites, respectively. Catalyzes the coordinated movement of the two tRNA molecules, the mRNA and conformational changes in the ribosome. The protein is Elongation factor G, mitochondrial (mef1) of Neurospora crassa (strain ATCC 24698 / 74-OR23-1A / CBS 708.71 / DSM 1257 / FGSC 987).